The primary structure comprises 457 residues: uncharacterized protein (457 aa).

The TRAM domain maps to 6–64; sequence PVHKGEVLDVTIMDLTYQGMGVAKVDNYPIFIENALPEEKITVKVTKTTKNFAFGDVEK. S-adenosyl-L-methionine-binding residues include Gln287, Tyr316, Glu337, and Asp385. The Nucleophile role is filled by Cys412.

This sequence belongs to the class I-like SAM-binding methyltransferase superfamily. RNA M5U methyltransferase family.

This is an uncharacterized protein from Lactiplantibacillus plantarum (strain ATCC BAA-793 / NCIMB 8826 / WCFS1) (Lactobacillus plantarum).